Consider the following 692-residue polypeptide: Follicle-stimulating hormone receptor (692 aa).

The signal sequence occupies residues 1 to 17 (MALLLVSLLAFLGSGSG). Cystine bridges form between cysteine 18/cysteine 25 and cysteine 23/cysteine 32. In terms of domain architecture, LRRNT spans 18–46 (CHHWLCHCSNRVFLCQDSKVTEIPPDLPR). Residues 18-365 (CHHWLCHCSN…EDIMGYNILR (348 aa)) are Extracellular-facing. LRR repeat units lie at residues 49 to 72 (IELR…FGDL), 73 to 97 (EKIE…LPNL), 98 to 118 (HEIR…AFQN), 119 to 143 (LPSL…KIQS), 144 to 169 (LQKV…MGLS), 170 to 192 (FESV…AFNG), 193 to 216 (TQLD…VFQG), 217 to 240 (ASGP…GLEN), and 241 to 259 (LKKL…PSLD). Residues asparagine 191 and asparagine 199 are each glycosylated (N-linked (GlcNAc...) asparagine). Intrachain disulfides connect cysteine 275–cysteine 345, cysteine 276–cysteine 292, cysteine 276–cysteine 355, and cysteine 292–cysteine 337. A glycan (N-linked (GlcNAc...) asparagine) is linked at asparagine 293. Tyrosine 334 is subject to Sulfotyrosine. The chain crosses the membrane as a helical span at residues 366–386 (VLIWFISILAITGNTTVLVVL). At 387 to 397 (TTSQYKLTVPR) the chain is on the cytoplasmic side. Residues 398 to 420 (FLMCNLAFADLCIGIYLLLIASV) form a helical membrane-spanning segment. At 421-442 (DIHTKSQYHNYAIDWQTGAGCD) the chain is on the extracellular side. The cysteines at positions 441 and 516 are disulfide-linked. A helical membrane pass occupies residues 443 to 464 (AAGFFTVFASELSVYTLAAITL). At 465–484 (ERWHTITHAMQLECKVQLCH) the chain is on the cytoplasmic side. Residues 485-507 (AASIMVLGWAFAFAAALFPIFGI) traverse the membrane as a helical segment. Topologically, residues 508–527 (SSYMKVSICLPMDIDSPLSQ) are extracellular. Residues 528–549 (LYVMALLVLNALAFVVICGCYT) form a helical membrane-spanning segment. Residues 550–572 (HIYLTVRNPNIVSSSRDTKIAKR) are Cytoplasmic-facing. The chain crosses the membrane as a helical span at residues 573–596 (MATLIFTDFLCMAPILFFAISASL). Topologically, residues 597–607 (KVPLITVSKAK) are extracellular. The chain crosses the membrane as a helical span at residues 608 to 629 (ILLVLFYPINSCANPFLYAIFT). The Cytoplasmic portion of the chain corresponds to 630 to 692 (KNFRRDFFVL…LVPLNHSVQN (63 aa)).

This sequence belongs to the G-protein coupled receptor 1 family. FSH/LSH/TSH subfamily. As to quaternary structure, homotrimer. Functions as a homotrimer binding the FSH hormone heterodimer composed of CGA and FSHB. Interacts with ARRB2. Interacts with APPL2; interaction is independent of follicle stimulating hormone stimulation. Post-translationally, N-glycosylated; indirectly required for FSH-binding, possibly via a conformational change that allows high affinity binding of hormone. In terms of processing, sulfated.

It localises to the cell membrane. In terms of biological role, g protein-coupled receptor for follitropin, the follicle-stimulating hormone. Through cAMP production activates the downstream PI3K-AKT and ERK1/ERK2 signaling pathways. In Mus musculus (Mouse), this protein is Follicle-stimulating hormone receptor (Fshr).